The chain runs to 234 residues: Carbohydrate deacetylase (234 aa).

Residues H60 and H123 each coordinate Mg(2+).

This sequence belongs to the YdjC deacetylase family. The cofactor is Mg(2+).

Probably catalyzes the deacetylation of acetylated carbohydrates an important step in the degradation of oligosaccharides. The sequence is that of Carbohydrate deacetylase from Bacillus anthracis.